The sequence spans 186 residues: Probable chorismate pyruvate-lyase (186 aa).

Substrate-binding residues include Arg78, Leu116, and Glu175.

The protein belongs to the UbiC family.

It localises to the cytoplasm. The enzyme catalyses chorismate = 4-hydroxybenzoate + pyruvate. It participates in cofactor biosynthesis; ubiquinone biosynthesis. Its function is as follows. Removes the pyruvyl group from chorismate, with concomitant aromatization of the ring, to provide 4-hydroxybenzoate (4HB) for the ubiquinone pathway. The sequence is that of Probable chorismate pyruvate-lyase from Psychromonas ingrahamii (strain DSM 17664 / CCUG 51855 / 37).